The chain runs to 235 residues: N-alpha-acetyltransferase 10 (235 aa).

Met1 carries the N-acetylmethionine modification. The interaction with NAA15 stretch occupies residues 1-58; the sequence is MNIRNARPEDLMNMQHCNLLCLPENYQMKYYFYHGLSWPQLSYIAEDENGKIVGYVLA. Residues 1–152 form the N-acetyltransferase domain; it reads MNIRNARPED…DAYAMKRDLT (152 aa). Position 136 is an N6-acetyllysine; by autocatalysis (Lys136). A compositionally biased stretch (basic and acidic residues) spans 196 to 213; it reads EEKGLAAEDSGGDSKDLS. The tract at residues 196 to 235 is disordered; the sequence is EEKGLAAEDSGGDSKDLSEVSETTESTDVKDSSEASDSAS. At Ser205 the chain carries Phosphoserine. Ser209 carries the post-translational modification Phosphoserine; by IKKB. Phosphoserine is present on residues Ser213 and Ser216.

Belongs to the acetyltransferase family. ARD1 subfamily. Component of the N-terminal acetyltransferase A complex (also called the NatA complex) composed of NAA10 and NAA15. Interacts with NAA15. Component of the N-terminal acetyltransferase A (NatA)/HYPK complex at least composed of NAA10, NAA15 and HYPK, which has N-terminal acetyltransferase activity. In complex with NAA15, interacts with HYPK. Component of the N-terminal acetyltransferase E (NatE) complex at least composed of NAA10, NAA15 and NAA50. Within the complex interacts with NAA15; the interaction is required for binding to NAAT50. Interacts with NAAT50. The interaction of the NatA complex with NAA50 reduces the acetylation activity of the NatA complex. Component of the N-terminal acetyltransferase E (NatE)/HYPK complex at least composed of NAA10, NAA15, NAA50 and HYPK. In complex with NAA15, interacts with HYPK; the interaction with HYPK reduces the capacity of the NatA complex to interact with NAA50. Interacts with HIF1A (via its ODD domain); the interaction increases HIF1A protein stability during normoxia, an down-regulates it when induced by hypoxia. Interacts with the ribosome. Binds to MYLK. Interacts with NAA16. Interacts (via its C-terminal domain) with TSC2, leading to its acetylation. Interacts with IKBKB. Interacts with HSPA1A and HSPA1B leading to its acetylation. In terms of processing, cleaved by caspases during apoptosis. Phosphorylation by IKBKB/IKKB at Ser-209 destabilises NAA10 and promotes its proteasome-mediated degradation. Post-translationally, autoacetylated at Lys-136 which stimulates its catalytic activity. In terms of tissue distribution, ubiquitous.

The protein localises to the cytoplasm. It localises to the nucleus. It carries out the reaction N-terminal glycyl-[protein] + acetyl-CoA = N-terminal N(alpha)-acetylglycyl-[protein] + CoA + H(+). It catalyses the reaction N-terminal L-alanyl-[protein] + acetyl-CoA = N-terminal N(alpha)-acetyl-L-alanyl-[protein] + CoA + H(+). The enzyme catalyses N-terminal L-seryl-[protein] + acetyl-CoA = N-terminal N(alpha)-acetyl-L-seryl-[protein] + CoA + H(+). The catalysed reaction is N-terminal L-valyl-[protein] + acetyl-CoA = N-terminal N(alpha)-acetyl-L-valyl-[protein] + CoA + H(+). It carries out the reaction N-terminal L-cysteinyl-[protein] + acetyl-CoA = N-terminal N(alpha)-acetyl-L-cysteinyl-[protein] + CoA + H(+). It catalyses the reaction N-terminal L-threonyl-[protein] + acetyl-CoA = N-terminal N(alpha)-acetyl-L-threonyl-[protein] + CoA + H(+). Catalytic subunit of the N-terminal acetyltransferase A (NatA) complex which displays alpha (N-terminal) acetyltransferase activity. Acetylates amino termini that are devoid of initiator methionine. The alpha (N-terminal) acetyltransferase activity may be important for vascular, hematopoietic and neuronal growth and development. Without NAA15, displays epsilon (internal) acetyltransferase activity towards HIF1A, thereby promoting its degradation. Represses MYLK kinase activity by acetylation, and thus represses tumor cell migration. Acetylates, and stabilizes TSC2, thereby repressing mTOR activity and suppressing cancer development. Acetylates HSPA1A and HSPA1B at 'Lys-77' which enhances its chaperone activity and leads to preferential binding to co-chaperone HOPX. Acetylates HIST1H4A. Acts as a negative regulator of sister chromatid cohesion during mitosis. This Mus musculus (Mouse) protein is N-alpha-acetyltransferase 10 (Naa10).